Consider the following 322-residue polypeptide: 4-hydroxythreonine-4-phosphate dehydrogenase (322 aa).

Substrate is bound by residues His-126 and Thr-127. A divalent metal cation contacts are provided by His-160, His-205, and His-260. The substrate site is built by Lys-268, Asn-277, and Arg-286.

It belongs to the PdxA family. Homodimer. Zn(2+) is required as a cofactor. Mg(2+) serves as cofactor. The cofactor is Co(2+).

The protein resides in the cytoplasm. It carries out the reaction 4-(phosphooxy)-L-threonine + NAD(+) = 3-amino-2-oxopropyl phosphate + CO2 + NADH. Its pathway is cofactor biosynthesis; pyridoxine 5'-phosphate biosynthesis; pyridoxine 5'-phosphate from D-erythrose 4-phosphate: step 4/5. Its function is as follows. Catalyzes the NAD(P)-dependent oxidation of 4-(phosphooxy)-L-threonine (HTP) into 2-amino-3-oxo-4-(phosphooxy)butyric acid which spontaneously decarboxylates to form 3-amino-2-oxopropyl phosphate (AHAP). This is 4-hydroxythreonine-4-phosphate dehydrogenase from Paracoccus denitrificans (strain Pd 1222).